A 123-amino-acid polypeptide reads, in one-letter code: Alpha-lactalbumin B/C (123 aa).

One can recognise a C-type lysozyme domain in the interval 1 to 123 (KQFTKCQLSQ…KLEQWLCEEL (123 aa)). Cystine bridges form between Cys6–Cys120, Cys28–Cys111, Cys61–Cys77, and Cys73–Cys91. Positions 79, 82, 84, 87, and 88 each coordinate Ca(2+).

It belongs to the glycosyl hydrolase 22 family. Lactose synthase (LS) is a heterodimer of a catalytic component, beta1,4-galactosyltransferase (beta4Gal-T1) and a regulatory component, alpha-lactalbumin (LA). In terms of tissue distribution, mammary gland specific. Secreted in milk.

It localises to the secreted. Regulatory subunit of lactose synthase, changes the substrate specificity of galactosyltransferase in the mammary gland making glucose a good acceptor substrate for this enzyme. This enables LS to synthesize lactose, the major carbohydrate component of milk. In other tissues, galactosyltransferase transfers galactose onto the N-acetylglucosamine of the oligosaccharide chains in glycoproteins. In Equus caballus (Horse), this protein is Alpha-lactalbumin B/C.